Reading from the N-terminus, the 468-residue chain is MRISALEGCRVALWGWGRESRAAYRAFRAAFPKQPLTLFCTIAEATEVQALADPVLSIETEVSVPRLAAFDVVIKSPGISPYSPLAVAATAAGAHFIGGTQLWFAAHADTDGVVPGAVCVTGTKGKSTTTALLAHLLRAAGHCTALAGNIGLPLLELLTPQPAPEYWAIELSSYQTADVAGSGARPALALVLNVFPEHLDWHGGEQRYINDKLSLVTVARPPIALLNAADPRLASLVLPQSDLRWFNQRDGWHVRGQVVYRGEQAVLDTALIPLPGAHNGSNVCAVLATLEALGLNAVALAPAACNFRPLPNRLQFLGERDGILWVNDSISTTPHATLAALDCFLGRRRVAVLVGGYDRGVNWECFAARITRKVPLDIVTMGANGPHIQALLAPLAAGRFGLHAAVDLPHAVALARTALGAQGGVLLLSPGAPSFGAYQDYVERGRHFAILAGFDPEVISSISGLGIA.

Residue 122-128 (GTKGKST) coordinates ATP.

The protein belongs to the MurCDEF family. MurD2 subfamily.

Its subcellular location is the cytoplasm. It carries out the reaction UDP-N-acetyl-alpha-D-muramoyl-L-alanine + L-glutamate + ATP = UDP-N-acetyl-alpha-D-muramoyl-L-alanyl-L-glutamate + ADP + phosphate + H(+). The protein operates within cell wall biogenesis; peptidoglycan biosynthesis. Cell wall formation. Catalyzes the addition of L-glutamate to the nucleotide precursor UDP-N-acetylmuramoyl-L-alanine. The chain is UDP-N-acetylmuramoyl-L-alanine--L-glutamate ligase from Xylella fastidiosa (strain Temecula1 / ATCC 700964).